Reading from the N-terminus, the 268-residue chain is Lectin ESA-2 (268 aa).

4 tandem repeats follow at residues 1–67, 68–135, 136–202, and 203–268. Residues 1-268 form a 4 X approximate tandem repeats region; that stretch reads GRYTVQNQWG…PIGFKGVATS (268 aa).

Monomer.

Lectin specific for high mannose N-glycans, recognizes the branched moiety of these glycans. Does not recognize other types of N-glycans or monosaccharides. Agglutinates trypsin-treated sheep and rabbit erythrocytes and untreated sheep erythrocytes. Has mitogenic activity on mouse lymphocytes. Does not require metal ions for activity. The polypeptide is Lectin ESA-2 (Eucheuma serra (Marine red alga)).